The sequence spans 96 residues: Venom protein 3.1 (96 aa).

An N-terminal signal peptide occupies residues 1-25 (MKFSLISVFLFAVFLSNENIFQAIA). The interval 45–84 (EAVMSSSLTNEEESRNWPHRATRNTLEKGQKRSPAARSEI) is disordered.

It belongs to the non-disulfide-bridged peptide (NDBP) superfamily. As to expression, expressed by the venom gland.

It localises to the secreted. The protein is Venom protein 3.1 of Lychas mucronatus (Chinese swimming scorpion).